Reading from the N-terminus, the 140-residue chain is Hemoglobin subunit alpha-D (140 aa).

A Globin domain is found at 1 to 140 (MLTDSDKKLV…VCTVLAEKYR (140 aa)). Histidine 57 and histidine 86 together coordinate heme b.

The protein belongs to the globin family. Heterotetramer of two alpha-D chains and two beta chains. In terms of tissue distribution, red blood cells.

Involved in oxygen transport from the lung to the various peripheral tissues. The chain is Hemoglobin subunit alpha-D (HBAD) from Columba livia (Rock dove).